The sequence spans 273 residues: Shikimate dehydrogenase (NADP(+)) (273 aa).

Shikimate contacts are provided by residues Ser-15–Ser-17 and Thr-62. Lys-66 functions as the Proton acceptor in the catalytic mechanism. Glu-78 contributes to the NADP(+) binding site. Residues Asn-87 and Asp-102 each contribute to the shikimate site. Residues Gly-127 to Ala-131, Asn-151 to Lys-156, and Met-215 each bind NADP(+). Residue Tyr-217 coordinates shikimate. Gly-239 is a binding site for NADP(+).

This sequence belongs to the shikimate dehydrogenase family. In terms of assembly, homodimer.

It carries out the reaction shikimate + NADP(+) = 3-dehydroshikimate + NADPH + H(+). Its pathway is metabolic intermediate biosynthesis; chorismate biosynthesis; chorismate from D-erythrose 4-phosphate and phosphoenolpyruvate: step 4/7. Involved in the biosynthesis of the chorismate, which leads to the biosynthesis of aromatic amino acids. Catalyzes the reversible NADPH linked reduction of 3-dehydroshikimate (DHSA) to yield shikimate (SA). The polypeptide is Shikimate dehydrogenase (NADP(+)) (Chromobacterium violaceum (strain ATCC 12472 / DSM 30191 / JCM 1249 / CCUG 213 / NBRC 12614 / NCIMB 9131 / NCTC 9757 / MK)).